The chain runs to 156 residues: Small ribosomal subunit protein uS7 (156 aa).

This sequence belongs to the universal ribosomal protein uS7 family. Part of the 30S ribosomal subunit. Contacts proteins S9 and S11.

Its function is as follows. One of the primary rRNA binding proteins, it binds directly to 16S rRNA where it nucleates assembly of the head domain of the 30S subunit. Is located at the subunit interface close to the decoding center, probably blocks exit of the E-site tRNA. The sequence is that of Small ribosomal subunit protein uS7 from Chelativorans sp. (strain BNC1).